The primary structure comprises 502 residues: Protein nucleotidyltransferase YdiU (502 aa).

Residues glycine 98, glycine 100, arginine 101, lysine 121, aspartate 133, glycine 134, arginine 184, and arginine 191 each contribute to the ATP site. Aspartate 260 serves as the catalytic Proton acceptor. Mg(2+)-binding residues include asparagine 261 and aspartate 270. An ATP-binding site is contributed by aspartate 270.

Belongs to the SELO family. Mg(2+) is required as a cofactor. It depends on Mn(2+) as a cofactor.

The catalysed reaction is L-seryl-[protein] + ATP = 3-O-(5'-adenylyl)-L-seryl-[protein] + diphosphate. It catalyses the reaction L-threonyl-[protein] + ATP = 3-O-(5'-adenylyl)-L-threonyl-[protein] + diphosphate. It carries out the reaction L-tyrosyl-[protein] + ATP = O-(5'-adenylyl)-L-tyrosyl-[protein] + diphosphate. The enzyme catalyses L-histidyl-[protein] + UTP = N(tele)-(5'-uridylyl)-L-histidyl-[protein] + diphosphate. The catalysed reaction is L-seryl-[protein] + UTP = O-(5'-uridylyl)-L-seryl-[protein] + diphosphate. It catalyses the reaction L-tyrosyl-[protein] + UTP = O-(5'-uridylyl)-L-tyrosyl-[protein] + diphosphate. Its function is as follows. Nucleotidyltransferase involved in the post-translational modification of proteins. It can catalyze the addition of adenosine monophosphate (AMP) or uridine monophosphate (UMP) to a protein, resulting in modifications known as AMPylation and UMPylation. This Rhizobium rhizogenes (strain K84 / ATCC BAA-868) (Agrobacterium radiobacter) protein is Protein nucleotidyltransferase YdiU.